The following is a 525-amino-acid chain: MNKSNSMNNTSLERLFQQLVLGLDGIPLMDVHWLIYVAFGAWLCSYVIHVLSSSSTVKVPVVGYRSVFEPTWLLRLRFVWEGGSIIGQGYNKFKDSIFQVRKLGTDIVIIPPNFIDEVRKLSQDKTRSVEPFINDFAGQYTRGMVFLQSDLQNRVIQQRLTPKLVSLTKVMKEELDYALTKEIPDMKDDEWVEVDISSIMVRLISRISARVFLGPEHCRNQEWLTNTAEYSESLFITGFILRVVPHILRPFIAPLLPSYRTLLRNVSSGRRVIGDIIRSQQGDGNEDILSWMRDAATGEEKQIDNIAQRMLILSLASIHTTAMTMTHAMYDLCARPEYIEPLRDEVKGVVDASGWDKTALNRLHRLDSFLKESQRFNPVFLLTFNRIYHQSMTLSDGTNLPSGTRIAVPSHAMLQDSAHVPGPTPPTEFDGFRYSKIRSDSNYAQKYLFSMTDSSNMAFGYGKYACPGRFYASNEMKLTLAILLLQFEFKLPDGKGRPRNITIDSDMIPDPRARLCVRKRSLRDE.

A helical membrane pass occupies residues 31-51; it reads VHWLIYVAFGAWLCSYVIHVL. Residue C466 coordinates heme.

This sequence belongs to the cytochrome P450 family. Requires heme as cofactor.

The protein localises to the membrane. It catalyses the reaction ent-kaur-16-ene + 3 reduced [NADPH--hemoprotein reductase] + 3 O2 = ent-kaur-16-en-19-oate + 3 oxidized [NADPH--hemoprotein reductase] + 4 H2O + 4 H(+). Its pathway is plant hormone biosynthesis; gibberellin biosynthesis. Its function is as follows. Catalyzes three successive oxidations of the 4-methyl group of ent-kaurene giving kaurenoic acid, a key step in gibberellin (GA) biosynthesis. This is Ent-kaurene oxidase (CYP503A1) from Gibberella intermedia (Bulb rot disease fungus).